Consider the following 283-residue polypeptide: MEGYKSFLVFLVSSLLLGFLGVIFTLVWVLHWREGLGWDGGAAEFNWHPVLVTSGFIFIQGIAIIVYRLPWTWNCSKLLMKFIHAGLHLTAFVFTIVALVAVFDFHNAKNIPNMYSLHSWIGLTVVILYALQLVLGVSIYLLPFARDTLRAALMPVHVYSGLLIFGTVIATALMGITEKLIFSLKEPPYSKMPPEAIFVNTFGLIILVFGGLVVWMVTTPAWKRPREQEIKALNPTVSSPDGTEEGSTITDCSNTEKSDVELNSEAARKRILKLDDAGQRSTM.

Topologically, residues 1–5 are cytoplasmic; it reads MEGYK. Residues 6 to 30 form a helical membrane-spanning segment; it reads SFLVFLVSSLLLGFLGVIFTLVWVL. In terms of domain architecture, Cytochrome b561 spans 13 to 218; the sequence is SSLLLGFLGV…FGGLVVWMVT (206 aa). Topologically, residues 31–45 are extracellular; sequence HWREGLGWDGGAAEF. The helical transmembrane segment at 46–67 threads the bilayer; the sequence is NWHPVLVTSGFIFIQGIAIIVY. Heme b contacts are provided by His-48, Arg-68, and Lys-77. Residues 68-76 are Cytoplasmic-facing; that stretch reads RLPWTWNCS. The L-ascorbate site is built by Lys-77 and Lys-81. A helical membrane pass occupies residues 77 to 103; it reads KLLMKFIHAGLHLTAFVFTIVALVAVF. His-84 is a binding site for heme b. The Extracellular segment spans residues 104–116; that stretch reads DFHNAKNIPNMYS. Residue His-106 participates in Fe(3+) binding. Heme b is bound by residues 113–116 and His-118; that span reads NMYS. Residues 117–142 form a helical membrane-spanning segment; it reads LHSWIGLTVVILYALQLVLGVSIYLL. At 143 to 149 the chain is on the cytoplasmic side; sequence PFARDTL. Arg-150 contributes to the L-ascorbate binding site. A helical membrane pass occupies residues 150-177; it reads RAALMPVHVYSGLLIFGTVIATALMGIT. Residues His-157 and Glu-178 each coordinate heme b. Residues 178–195 lie on the Extracellular side of the membrane; sequence EKLIFSLKEPPYSKMPPE. The chain crosses the membrane as a helical span at residues 196 to 220; it reads AIFVNTFGLIILVFGGLVVWMVTTP. Residues 221–283 are Cytoplasmic-facing; the sequence is AWKRPREQEI…LDDAGQRSTM (63 aa). Heme b is bound at residue Lys-223. A disordered region spans residues 234-263; that stretch reads NPTVSSPDGTEEGSTITDCSNTEKSDVELN. Polar residues predominate over residues 235–253; that stretch reads PTVSSPDGTEEGSTITDCS. Basic and acidic residues predominate over residues 254 to 263; sequence NTEKSDVELN.

Homodimer. It depends on heme b as a cofactor.

It is found in the cell membrane. The protein localises to the apical cell membrane. It carries out the reaction Fe(3+)(out) + L-ascorbate(in) = monodehydro-L-ascorbate radical(in) + Fe(2+)(out) + H(+). It catalyses the reaction Cu(2+)(out) + L-ascorbate(in) = Cu(+)(out) + monodehydro-L-ascorbate radical(in) + H(+). The enzyme catalyses monodehydro-L-ascorbate radical(out) + L-ascorbate(in) = monodehydro-L-ascorbate radical(in) + L-ascorbate(out). Functionally, plasma membrane reductase that uses cytoplasmic ascorbate as an electron donor to reduce extracellular Fe(3+) into Fe(2+). It is also able to reduce extracellular monodehydro-L-ascorbate and may be involved in extracellular ascorbate regeneration. May also function as a cupric transmembrane reductase. In Xenopus tropicalis (Western clawed frog), this protein is Plasma membrane ascorbate-dependent reductase CYBRD1 (cybrd1).